A 3748-amino-acid chain; its full sequence is Intermembrane lipid transfer protein VPS13C (3748 aa).

One can recognise a Chorein N-terminal domain in the interval 3 to 115; the sequence is LESVVADLLN…SLQDIKQKEL (113 aa). Position 132 is a phosphoserine (serine 132). Threonine 613 carries the phosphothreonine modification. The residue at position 618 (serine 618) is a Phosphoserine. Residue threonine 623 is modified to Phosphothreonine. 4 positions are modified to phosphoserine: serine 736, serine 841, serine 871, and serine 873. The FFAT signature appears at 876–882; it reads EFFDAED. Threonine 1968 is modified (phosphothreonine). Residues serine 1974 and serine 2442 each carry the phosphoserine modification. The tract at residues 2410-3304 is required for late endosome/lysosome localization; that stretch reads DYSLKDRAPF…IQQDIDALNT (895 aa). An SHR-BD domain is found at 2760–3012; the sequence is ELSVFSPYWL…LFAWADPTGI (253 aa). Residues 3305-3748 are required for lipid droplet localization; the sequence is ELMESSMTDM…VKLLRPQGPS (444 aa). Residues arginine 3514 and arginine 3521 each carry the omega-N-methylarginine modification. Residue lysine 3533 is modified to N6-acetyllysine.

Belongs to the VPS13 family.

Its subcellular location is the mitochondrion outer membrane. The protein localises to the lipid droplet. It localises to the endoplasmic reticulum membrane. The protein resides in the lysosome membrane. It is found in the late endosome membrane. Mediates the transfer of lipids between membranes at organelle contact sites. Necessary for proper mitochondrial function and maintenance of mitochondrial transmembrane potential. Involved in the regulation of PINK1/PRKN-mediated mitophagy in response to mitochondrial depolarization. The chain is Intermembrane lipid transfer protein VPS13C from Mus musculus (Mouse).